The chain runs to 252 residues: Isoprenyl transferase (252 aa).

D32 is a catalytic residue. Position 32 (D32) interacts with Mg(2+). Substrate is bound by residues 33-36 (GNGR), W37, R45, H49, and 77-79 (STE). N80 (proton acceptor) is an active-site residue. Substrate contacts are provided by residues W81, R83, R200, and 206–208 (RLS). E219 contributes to the Mg(2+) binding site.

It belongs to the UPP synthase family. In terms of assembly, homodimer. It depends on Mg(2+) as a cofactor.

Its function is as follows. Catalyzes the condensation of isopentenyl diphosphate (IPP) with allylic pyrophosphates generating different type of terpenoids. The sequence is that of Isoprenyl transferase from Listeria monocytogenes serotype 4b (strain F2365).